The primary structure comprises 158 residues: NADPH-dependent 7-cyano-7-deazaguanine reductase (158 aa).

Residues 1 to 13 (MAKRSNTTMTSAG) show a composition bias toward polar residues. Positions 1 to 37 (MAKRSNTTMTSAGLQLGREVAPPDSPETAKLDRVPNP) are disordered. Over residues 27 to 37 (ETAKLDRVPNP) the composition is skewed to basic and acidic residues. Catalysis depends on cysteine 56, which acts as the Thioimide intermediate. The active-site Proton donor is aspartate 63. Substrate is bound by residues 78-80 (VES) and 97-98 (HE).

Belongs to the GTP cyclohydrolase I family. QueF type 1 subfamily.

The protein resides in the cytoplasm. The catalysed reaction is 7-aminomethyl-7-carbaguanine + 2 NADP(+) = 7-cyano-7-deazaguanine + 2 NADPH + 3 H(+). It participates in tRNA modification; tRNA-queuosine biosynthesis. Its function is as follows. Catalyzes the NADPH-dependent reduction of 7-cyano-7-deazaguanine (preQ0) to 7-aminomethyl-7-deazaguanine (preQ1). This is NADPH-dependent 7-cyano-7-deazaguanine reductase from Bradyrhizobium sp. (strain ORS 278).